We begin with the raw amino-acid sequence, 290 residues long: Pyridoxal kinase PdxY (290 aa).

Substrate-binding positions include serine 12 and threonine 47–glutamine 48. ATP contacts are provided by residues aspartate 114, glutamate 151, lysine 184, and arginine 211–leucine 214. Aspartate 225 lines the substrate pocket.

Belongs to the pyridoxine kinase family. PdxY subfamily. Homodimer. Mg(2+) is required as a cofactor.

It catalyses the reaction pyridoxal + ATP = pyridoxal 5'-phosphate + ADP + H(+). Its pathway is cofactor metabolism; pyridoxal 5'-phosphate salvage; pyridoxal 5'-phosphate from pyridoxal: step 1/1. Its function is as follows. Pyridoxal kinase involved in the salvage pathway of pyridoxal 5'-phosphate (PLP). Catalyzes the phosphorylation of pyridoxal to PLP. The sequence is that of Pyridoxal kinase PdxY from Pseudomonas putida (strain W619).